The sequence spans 592 residues: Protein kinase C zeta type (592 aa).

Positions 15-98 constitute a PB1 domain; the sequence is RVRLKAHYGG…EGLIIHVFPS (84 aa). Residues 79-145 form an interaction with SQSTM1 region; sequence AFRLARQCRD…KRFNRRAYCG (67 aa). The Phorbol-ester/DAG-type zinc-finger motif lies at 130-180; that stretch reads GHLFQAKRFNRRAYCGQCSERIWGLARQGYRCINCKLLVHKRCHGLVPLTC. In terms of domain architecture, Protein kinase spans 252-518; that stretch reads FDLIRVIGRG…FSDIKSHAFF (267 aa). ATP is bound by residues 258–266 and lysine 281; that span reads IGRGSYAKV. The active-site Proton acceptor is the aspartate 376. Phosphothreonine; by PDPK1 and PI3K is present on threonine 410. The region spanning 519 to 590 is the AGC-kinase C-terminal domain; the sequence is RSIDWDLLEK…INPLLLSTEE (72 aa). Residue threonine 560 is modified to Phosphothreonine. Position 591 is a phosphoserine (serine 591).

Belongs to the protein kinase superfamily. AGC Ser/Thr protein kinase family. PKC subfamily. In terms of assembly, forms a ternary complex with SQSTM1 and KCNAB2. Forms another ternary complex with SQSTM1 and GABRR3. Forms a complex with SQSTM1 and MAP2K5. Interacts with PARD6A, PARD6B, PARD6G and SQSTM1. Part of a complex with PARD3, PARD6A or PARD6B or PARD6G and CDC42 or RAC1. Interacts with ADAP1/CENTA1. Forms a ternary complex composed of SQSTM1 and PAWR. Interacts directly with SQSTM1. Interacts with IKBKB. Interacts (via the protein kinase domain) with WWC1. Forms a tripartite complex with WWC1 and DDR1, but predominantly in the absence of collagen. Component of the Par polarity complex, composed of at least phosphorylated PRKCZ, PARD3 and TIAM1. Interacts with PDPK1 (via N-terminal region). Interacts with WDFY2 (via WD repeats 1-3). Interacts with VAMP2. Forms a complex with WDFY2 and VAMP2. Interacts with APPL1. Interacts with WWC1, WWC2 and WWC3. CDH5 is required for its phosphorylation at Thr-410. Phosphorylated by protein kinase PDPK1; phosphorylation is inhibited by the apoptotic C-terminal cleavage product of PKN2. Phosphorylation at Thr-410 by PI3K activates the kinase. Expressed in brain, and to a lesser extent in lung, kidney and testis.

It is found in the cytoplasm. It localises to the endosome. The protein resides in the cell junction. Its subcellular location is the membrane. The enzyme catalyses L-seryl-[protein] + ATP = O-phospho-L-seryl-[protein] + ADP + H(+). It carries out the reaction L-threonyl-[protein] + ATP = O-phospho-L-threonyl-[protein] + ADP + H(+). Atypical PKCs (PRKCI and PRKCZ) exhibit an elevated basal enzymatic activity (that may be due to the interaction with SMG1 or SQSTM1) and are not regulated by diacylglycerol, phosphatidylserine, phorbol esters or calcium ions. Two specific sites, Thr-410 (activation loop of the kinase domain) and Thr-560 (turn motif), need to be phosphorylated for its full activation. Phosphatidylinositol 3,4,5-trisphosphate might be a physiological activator. Isoform 2: Constitutively active. Its function is as follows. Calcium- and diacylglycerol-independent serine/threonine-protein kinase that functions in phosphatidylinositol 3-kinase (PI3K) pathway and mitogen-activated protein (MAP) kinase cascade, and is involved in NF-kappa-B activation, mitogenic signaling, cell proliferation, cell polarity, inflammatory response and maintenance of long-term potentiation (LTP). Upon lipopolysaccharide (LPS) treatment in macrophages, or following mitogenic stimuli, functions downstream of PI3K to activate MAP2K1/MEK1-MAPK1/ERK2 signaling cascade independently of RAF1 activation. Required for insulin-dependent activation of AKT3, but may function as an adapter rather than a direct activator. Upon insulin treatment may act as a downstream effector of PI3K and contribute to the activation of translocation of the glucose transporter SLC2A4/GLUT4 and subsequent glucose transport in adipocytes. In EGF-induced cells, binds and activates MAP2K5/MEK5-MAPK7/ERK5 independently of its kinase activity and can activate JUN promoter through MEF2C. Through binding with SQSTM1/p62, functions in interleukin-1 signaling and activation of NF-kappa-B with the specific adapters RIPK1 and TRAF6. Participates in TNF-dependent transactivation of NF-kappa-B by phosphorylating and activating IKBKB kinase, which in turn leads to the degradation of NF-kappa-B inhibitors. In migrating astrocytes, forms a cytoplasmic complex with PARD6A and is recruited by CDC42 to function in the establishment of cell polarity along with the microtubule motor and dynein. In association with FEZ1, stimulates neuronal differentiation in PC12 cells. In the inflammatory response, is required for the T-helper 2 (Th2) differentiation process, including interleukin production, efficient activation of JAK1 and the subsequent phosphorylation and nuclear translocation of STAT6. May be involved in development of allergic airway inflammation (asthma), a process dependent on Th2 immune response. In the NF-kappa-B-mediated inflammatory response, can relieve SETD6-dependent repression of NF-kappa-B target genes by phosphorylating the RELA subunit at 'Ser-311'. Phosphorylates VAMP2 in vitro. Phosphorylates and activates LRRK1, which phosphorylates RAB proteins involved in intracellular trafficking. Functionally, involved in late synaptic long term potention phase in CA1 hippocampal cells and long term memory maintenance. The sequence is that of Protein kinase C zeta type (PRKCZ) from Homo sapiens (Human).